Here is a 67-residue protein sequence, read N- to C-terminus: Conotoxin TxMMSK-01 (67 aa).

The first 20 residues, Met-1–Ala-20, serve as a signal peptide directing secretion. A propeptide spanning residues Val-21–Arg-53 is cleaved from the precursor. 3 disulfide bridges follow: Cys-54/Cys-66, Cys-55/Cys-62, and Cys-59/Cys-65. A 4-hydroxyproline modification is found at Pro-64. Cysteine amide is present on Cys-66.

The protein belongs to the conotoxin M superfamily. Expressed by the venom duct.

The protein resides in the secreted. This Conus textile (Cloth-of-gold cone) protein is Conotoxin TxMMSK-01.